The primary structure comprises 92 residues: Small integral membrane protein 12 (92 aa).

A helical transmembrane segment spans residues 15 to 34; it reads YVTFPVAFVVGAVGYHLEWF.

Belongs to the SMIM12 family.

The protein resides in the membrane. In Nomascus leucogenys (Northern white-cheeked gibbon), this protein is Small integral membrane protein 12 (SMIM12).